Here is a 484-residue protein sequence, read N- to C-terminus: Glutamyl-tRNA(Gln) amidotransferase subunit A (484 aa).

Active-site charge relay system residues include Lys77 and Ser152. The Acyl-ester intermediate role is filled by Ser176.

Belongs to the amidase family. GatA subfamily. As to quaternary structure, heterotrimer of A, B and C subunits.

It catalyses the reaction L-glutamyl-tRNA(Gln) + L-glutamine + ATP + H2O = L-glutaminyl-tRNA(Gln) + L-glutamate + ADP + phosphate + H(+). Allows the formation of correctly charged Gln-tRNA(Gln) through the transamidation of misacylated Glu-tRNA(Gln) in organisms which lack glutaminyl-tRNA synthetase. The reaction takes place in the presence of glutamine and ATP through an activated gamma-phospho-Glu-tRNA(Gln). This is Glutamyl-tRNA(Gln) amidotransferase subunit A from Pseudomonas aeruginosa (strain ATCC 15692 / DSM 22644 / CIP 104116 / JCM 14847 / LMG 12228 / 1C / PRS 101 / PAO1).